Here is a 293-residue protein sequence, read N- to C-terminus: Ribosomal RNA small subunit methyltransferase A (293 aa).

S-adenosyl-L-methionine is bound by residues Asn29, Leu31, Gly56, Glu77, Asp102, and Asn127.

The protein belongs to the class I-like SAM-binding methyltransferase superfamily. rRNA adenine N(6)-methyltransferase family. RsmA subfamily.

It localises to the cytoplasm. The enzyme catalyses adenosine(1518)/adenosine(1519) in 16S rRNA + 4 S-adenosyl-L-methionine = N(6)-dimethyladenosine(1518)/N(6)-dimethyladenosine(1519) in 16S rRNA + 4 S-adenosyl-L-homocysteine + 4 H(+). Functionally, specifically dimethylates two adjacent adenosines (A1518 and A1519) in the loop of a conserved hairpin near the 3'-end of 16S rRNA in the 30S particle. May play a critical role in biogenesis of 30S subunits. This chain is Ribosomal RNA small subunit methyltransferase A, found in Lysinibacillus sphaericus (strain C3-41).